The following is a 201-amino-acid chain: Mediator of RNA polymerase II transcription subunit 22 (201 aa).

Positions 93–123 (SVNEAIDQRNQQLRALQEECDRKLIALRDEV) form a coiled coil. The interval 166–201 (LSAPLLASPEPSAGGPLQAAAPTHSHAGGPGPTEHA) is disordered.

As to quaternary structure, component of the Mediator complex, which is composed of MED1, MED4, MED6, MED7, MED8, MED9, MED10, MED11, MED12, MED13, MED13L, MED14, MED15, MED16, MED17, MED18, MED19, MED20, MED21, MED22, MED23, MED24, MED25, MED26, MED27, MED29, MED30, MED31, CCNC, CDK8 and CDC2L6/CDK11. The MED12, MED13, CCNC and CDK8 subunits form a distinct module termed the CDK8 module. Mediator containing the CDK8 module is less active than Mediator lacking this module in supporting transcriptional activation. Individual preparations of the Mediator complex lacking one or more distinct subunits have been variously termed ARC, CRSP, DRIP, PC2, SMCC and TRAP.

It is found in the nucleus. In terms of biological role, component of the Mediator complex, a coactivator involved in the regulated transcription of nearly all RNA polymerase II-dependent genes. Mediator functions as a bridge to convey information from gene-specific regulatory proteins to the basal RNA polymerase II transcription machinery. Mediator is recruited to promoters by direct interactions with regulatory proteins and serves as a scaffold for the assembly of a functional preinitiation complex with RNA polymerase II and the general transcription factors. The sequence is that of Mediator of RNA polymerase II transcription subunit 22 (MED22) from Bos taurus (Bovine).